Consider the following 37-residue polypeptide: Cytochrome b6-f complex subunit 5 (37 aa).

A helical membrane pass occupies residues 5–25; sequence ILLGIVLGMVLVTLAGLFVAA.

This sequence belongs to the PetG family. The 4 large subunits of the cytochrome b6-f complex are cytochrome b6, subunit IV (17 kDa polypeptide, PetD), cytochrome f and the Rieske protein, while the 4 small subunits are PetG, PetL, PetM and PetN. The complex functions as a dimer.

The protein localises to the cellular thylakoid membrane. Functionally, component of the cytochrome b6-f complex, which mediates electron transfer between photosystem II (PSII) and photosystem I (PSI), cyclic electron flow around PSI, and state transitions. PetG is required for either the stability or assembly of the cytochrome b6-f complex. In Synechococcus sp. (strain JA-3-3Ab) (Cyanobacteria bacterium Yellowstone A-Prime), this protein is Cytochrome b6-f complex subunit 5.